A 308-amino-acid chain; its full sequence is D-alanine--D-alanine ligase (308 aa).

Residues 104–301 (KQIWQGSDLP…FDELCVAILE (198 aa)) form the ATP-grasp domain. ATP is bound at residue 130-185 (IAELGLPVIIKPVHEGSSVGMSKVEKAEDFAAAIEKATQHDAVVMAEKWITGREFT). Mg(2+)-binding residues include Asp-255, Glu-268, and Asn-270.

Belongs to the D-alanine--D-alanine ligase family. Mg(2+) is required as a cofactor. Mn(2+) serves as cofactor.

It is found in the cytoplasm. The catalysed reaction is 2 D-alanine + ATP = D-alanyl-D-alanine + ADP + phosphate + H(+). The protein operates within cell wall biogenesis; peptidoglycan biosynthesis. Cell wall formation. The chain is D-alanine--D-alanine ligase from Acinetobacter baumannii (strain SDF).